The following is a 452-amino-acid chain: Probable cytosolic iron-sulfur protein assembly protein 1 (452 aa).

Residues 1-12 (MPPPTTPTPNPS) are compositionally biased toward pro residues. The tract at residues 1-24 (MPPPTTPTPNPSIPQKATLTPLPP) is disordered. WD repeat units lie at residues 70 to 121 (GHAR…DAAA), 161 to 200 (GHEN…QGGD), 213 to 267 (EHDG…EWVC), 273 to 319 (GHGG…FGGV), 340 to 379 (VHTR…EDVA), and 411 to 452 (YEVN…VRIS).

Belongs to the WD repeat CIA1 family.

In terms of biological role, essential component of the cytosolic iron-sulfur (Fe/S) protein assembly machinery. Required for the maturation of extramitochondrial Fe/S proteins. The chain is Probable cytosolic iron-sulfur protein assembly protein 1 from Chaetomium globosum (strain ATCC 6205 / CBS 148.51 / DSM 1962 / NBRC 6347 / NRRL 1970) (Soil fungus).